The following is a 77-amino-acid chain: Putative defensin-like protein 118 (77 aa).

The N-terminal stretch at Met1–Gly25 is a signal peptide. 4 cysteine pairs are disulfide-bonded: Cys29–Cys75, Cys39–Cys58, Cys44–Cys69, and Cys48–Cys71.

Belongs to the DEFL family.

The protein localises to the secreted. In Arabidopsis thaliana (Mouse-ear cress), this protein is Putative defensin-like protein 118 (LCR52).